The following is a 147-amino-acid chain: MSEELQPVFSIERLYVKDLSLEVPHAPQIFLEQGEPEVDMRVSTGSQKLEDGYYNVDVTVTVTAKLDNERTMFLNEVTQSGIFRLENIPEEDVQLLLGVACPNILFPYAREAVSGTVTRAGFPPVLLAPINFEAIYQQQQEAEAAGA.

It belongs to the SecB family. In terms of assembly, homotetramer, a dimer of dimers. One homotetramer interacts with 1 SecA dimer.

It is found in the cytoplasm. Its function is as follows. One of the proteins required for the normal export of preproteins out of the cell cytoplasm. It is a molecular chaperone that binds to a subset of precursor proteins, maintaining them in a translocation-competent state. It also specifically binds to its receptor SecA. This Neisseria meningitidis serogroup C (strain 053442) protein is Protein-export protein SecB.